The primary structure comprises 394 residues: Elongation factor Tu (394 aa).

The 195-residue stretch at 10 to 204 (KPHVNVGTIG…ALDSYIPEPQ (195 aa)) folds into the tr-type G domain. The tract at residues 19–26 (GHVDHGKT) is G1. Position 19-26 (19-26 (GHVDHGKT)) interacts with GTP. Threonine 26 serves as a coordination point for Mg(2+). Residues 60–64 (GITIN) form a G2 region. The G3 stretch occupies residues 81–84 (DCPG). GTP contacts are provided by residues 81–85 (DCPGH) and 136–139 (NKCD). Residues 136–139 (NKCD) are G4. The segment at 174-176 (SAL) is G5.

Belongs to the TRAFAC class translation factor GTPase superfamily. Classic translation factor GTPase family. EF-Tu/EF-1A subfamily. In terms of assembly, monomer.

The protein localises to the cytoplasm. It catalyses the reaction GTP + H2O = GDP + phosphate + H(+). GTP hydrolase that promotes the GTP-dependent binding of aminoacyl-tRNA to the A-site of ribosomes during protein biosynthesis. The chain is Elongation factor Tu from Shewanella putrefaciens (Pseudomonas putrefaciens).